Reading from the N-terminus, the 77-residue chain is Putative Fis-like DNA-binding protein (77 aa).

Residues 53 to 72 (QSLAADYLGINRNTLRKKLQ) constitute a DNA-binding region (H-T-H motif).

The protein belongs to the transcriptional regulatory Fis family.

The protein is Putative Fis-like DNA-binding protein of Ralstonia nicotianae (strain ATCC BAA-1114 / GMI1000) (Ralstonia solanacearum).